The sequence spans 483 residues: Dual specificity protein kinase CLK1 (483 aa).

A disordered region spans residues 1-49 (MRHSKRTYCPDWDERDWDYGTWRSSSSHKRKKRSHSSAREQKRCRYDHS). Residues 26–36 (SSHKRKKRSHS) show a composition bias toward basic residues. The short motif at 29–33 (KRKKR) is the Nuclear localization signal element. A compositionally biased stretch (basic and acidic residues) spans 37 to 49 (SAREQKRCRYDHS). Ser-61 is subject to Phosphoserine. Residues 84–111 (EPGHPYGEPGSRYQMHSSKSSGRSGRSS) show a composition bias toward low complexity. A disordered region spans residues 84 to 146 (EPGHPYGEPG…SRSVEDDEEG (63 aa)). Over residues 112–137 (YKSKHRSRHHTSQHHSHGKSHRRKRS) the composition is skewed to basic residues. A Phosphoserine modification is found at Ser-139. One can recognise a Protein kinase domain in the interval 160-476 (YEIVDTLGEG…LKEALKHPFF (317 aa)). ATP-binding positions include 166 to 174 (LGEGAFGKV) and Lys-190. The active-site Proton acceptor is the Asp-287.

Belongs to the protein kinase superfamily. CMGC Ser/Thr protein kinase family. Lammer subfamily. As to quaternary structure, interacts with PPIG and UBL5. Post-translationally, autophosphorylates on all three types of residues.

Its subcellular location is the nucleus. It catalyses the reaction L-seryl-[protein] + ATP = O-phospho-L-seryl-[protein] + ADP + H(+). It carries out the reaction L-threonyl-[protein] + ATP = O-phospho-L-threonyl-[protein] + ADP + H(+). The catalysed reaction is L-tyrosyl-[protein] + ATP = O-phospho-L-tyrosyl-[protein] + ADP + H(+). With respect to regulation, regulates splicing of its own pre-mRNA according to its kinase activity; increased expression of the catalytically active form influences splicing to generate the catalytically inactive splicing variant lacking the kinase domain. Leucettine L41 inhibits its kinase activity and affects the regulation of alternative splicing mediated by phosphorylation of SR proteins. Dual specificity kinase acting on both serine/threonine and tyrosine-containing substrates. Phosphorylates serine- and arginine-rich (SR) proteins of the spliceosomal complex and may be a constituent of a network of regulatory mechanisms that enable SR proteins to control RNA splicing. Phosphorylates: SRSF1, SRSF3 and PTPN1. Regulates the alternative splicing of tissue factor (F3) pre-mRNA in endothelial cells. The protein is Dual specificity protein kinase CLK1 of Mus musculus (Mouse).